The chain runs to 231 residues: 7-cyano-7-deazaguanine synthase (231 aa).

Residue 17 to 27 (FSGGMDSFTLL) coordinates ATP. Positions 193, 201, 204, and 207 each coordinate Zn(2+).

The protein belongs to the QueC family. Requires Zn(2+) as cofactor.

The catalysed reaction is 7-carboxy-7-deazaguanine + NH4(+) + ATP = 7-cyano-7-deazaguanine + ADP + phosphate + H2O + H(+). Its pathway is purine metabolism; 7-cyano-7-deazaguanine biosynthesis. Its function is as follows. Catalyzes the ATP-dependent conversion of 7-carboxy-7-deazaguanine (CDG) to 7-cyano-7-deazaguanine (preQ(0)). In Hahella chejuensis (strain KCTC 2396), this protein is 7-cyano-7-deazaguanine synthase.